Here is a 93-residue protein sequence, read N- to C-terminus: Signal recognition particle 19 kDa protein (93 aa).

The protein belongs to the SRP19 family. In terms of assembly, part of the signal recognition particle protein translocation system, which is composed of SRP and FtsY. Archaeal SRP consists of a 7S RNA molecule of 300 nucleotides and two protein subunits: SRP54 and SRP19.

The protein resides in the cytoplasm. In terms of biological role, involved in targeting and insertion of nascent membrane proteins into the cytoplasmic membrane. Binds directly to 7S RNA and mediates binding of the 54 kDa subunit of the SRP. The polypeptide is Signal recognition particle 19 kDa protein (Haloquadratum walsbyi (strain DSM 16790 / HBSQ001)).